A 158-amino-acid polypeptide reads, in one-letter code: Transcription elongation factor GreA (158 aa).

Belongs to the GreA/GreB family.

Functionally, necessary for efficient RNA polymerase transcription elongation past template-encoded arresting sites. The arresting sites in DNA have the property of trapping a certain fraction of elongating RNA polymerases that pass through, resulting in locked ternary complexes. Cleavage of the nascent transcript by cleavage factors such as GreA or GreB allows the resumption of elongation from the new 3'terminus. GreA releases sequences of 2 to 3 nucleotides. This chain is Transcription elongation factor GreA, found in Bacillus licheniformis (strain ATCC 14580 / DSM 13 / JCM 2505 / CCUG 7422 / NBRC 12200 / NCIMB 9375 / NCTC 10341 / NRRL NRS-1264 / Gibson 46).